We begin with the raw amino-acid sequence, 125 residues long: MGKAKSPRRVADNEALAVGTTIRGSAQKLNLVAELIRGKKAEEALNILAFSKKAMARDASKVLASAIANAENNHDLDVDALVVAEASVGKSITMKRFHTRGRGKSTRILKPFSKLRIVVREVEEA.

This sequence belongs to the universal ribosomal protein uL22 family. In terms of assembly, part of the 50S ribosomal subunit.

Its function is as follows. This protein binds specifically to 23S rRNA; its binding is stimulated by other ribosomal proteins, e.g. L4, L17, and L20. It is important during the early stages of 50S assembly. It makes multiple contacts with different domains of the 23S rRNA in the assembled 50S subunit and ribosome. In terms of biological role, the globular domain of the protein is located near the polypeptide exit tunnel on the outside of the subunit, while an extended beta-hairpin is found that lines the wall of the exit tunnel in the center of the 70S ribosome. The sequence is that of Large ribosomal subunit protein uL22 from Erythrobacter litoralis (strain HTCC2594).